A 331-amino-acid chain; its full sequence is GTP-binding protein RHO5 (331 aa).

Residue 10–17 (GDGAVGKT) participates in GTP binding. Residues 51–76 (ASSPLELDNGNDKRGSLSSASSSPST) are disordered. Positions 66-75 (SLSSASSSPS) are enriched in low complexity. Residues 87–91 (DTAGQ) and 156–159 (TKSD) contribute to the GTP site. Phosphoserine is present on residues Ser-223 and Ser-228. Residues Thr-232 and Thr-244 each carry the phosphothreonine modification. The segment at 239–331 (TATTNTNGDK…KKKKSKCVIL (93 aa)) is disordered. A compositionally biased stretch (polar residues) spans 258–273 (HHNNSTDSTLPKGSLQ). Lys-276 participates in a covalent cross-link: Glycyl lysine isopeptide (Lys-Gly) (interchain with G-Cter in ubiquitin). Residues 287–297 (GQKDKIHEQSK) are compositionally biased toward basic and acidic residues. A compositionally biased stretch (basic residues) spans 308-331 (HHNKQAKPKTRNDKKKKKSKCVIL). A Cysteine methyl ester modification is found at Cys-328. Residue Cys-328 is the site of S-geranylgeranyl cysteine attachment. Residues 329 to 331 (VIL) constitute a propeptide, removed in mature form.

Belongs to the small GTPase superfamily. Rho family. In terms of assembly, interacts with RGD2.

It is found in the membrane. Its subcellular location is the mitochondrion. Functionally, small GTPase that negatively regulates a MAP kinase branch, downstream of SLT2, of the PKC1-mediated signal transduction pathway. With its specific guanine nucleotide exchange factor (GEF), the heterodimeric complex DCK1/LMO1, relocates to mitochondria upon oxidative stress and triggers cell death. The DCK1/LMO1/RHO5 signaling module that mediates mitochondrial turnover under nitrogen starvation conditions via mitophagy. The DCK1/LMO1/RHO5 signaling module also plays a role in cell wall integrity signaling. This chain is GTP-binding protein RHO5, found in Saccharomyces cerevisiae (strain ATCC 204508 / S288c) (Baker's yeast).